Reading from the N-terminus, the 147-residue chain is Small ribosomal subunit protein bS6 (147 aa).

A compositionally biased stretch (basic and acidic residues) spans Glu97–Ala141. Residues Glu97–Glu147 form a disordered region.

It belongs to the bacterial ribosomal protein bS6 family.

Functionally, binds together with bS18 to 16S ribosomal RNA. This Nitrobacter hamburgensis (strain DSM 10229 / NCIMB 13809 / X14) protein is Small ribosomal subunit protein bS6.